The primary structure comprises 874 residues: Leucine--tRNA ligase (874 aa).

The 'HIGH' region signature appears at 43-53 (PYPSGRIHIGH). The 'KMSKS' region signature appears at 630-634 (KMSKS). Lys-633 contacts ATP.

The protein belongs to the class-I aminoacyl-tRNA synthetase family.

The protein localises to the cytoplasm. It carries out the reaction tRNA(Leu) + L-leucine + ATP = L-leucyl-tRNA(Leu) + AMP + diphosphate. This chain is Leucine--tRNA ligase, found in Bradyrhizobium sp. (strain BTAi1 / ATCC BAA-1182).